We begin with the raw amino-acid sequence, 832 residues long: Protein wech (832 aa).

Polar residues predominate over residues 1-14; that stretch reads MMELLSNNSVPQQM. The tract at residues 1–42 is disordered; that stretch reads MMELLSNNSVPQQMASSNAPSANNVAHSSTANGSGGGSVSSN. Over residues 15 to 32 the composition is skewed to low complexity; the sequence is ASSNAPSANNVAHSSTAN. At serine 107 the chain carries Phosphoserine. B box-type zinc fingers lie at residues 118-163 and 184-224; these read NSSI…IVSL and SGNF…YASI. Residues cysteine 123, cysteine 126, cysteine 145, histidine 149, cysteine 189, histidine 192, cysteine 211, and histidine 216 each contribute to the Zn(2+) site. A phosphoserine mark is found at serine 470, serine 475, and serine 506. NHL repeat units follow at residues 537–580, 584–627, 631–674, 680–722, and 727–770; these read SLSF…FNPD, KFKF…FTAS, LLKF…FDSE, QIVF…IDPD, and LSVK…FNQN.

As to quaternary structure, interacts with the head domain of rhea and the kinase domain of Ilk. Interacts with AGO1. Interacts with mei-P26. In terms of tissue distribution, expressed in ovarian germline stem cells (at protein level). Expressed ubiquitously in all epithelial cells during early stages of embryogenesis. Specifically expressed at epidermal muscle attachment site.

In terms of biological role, vital for larval development. Plays a role in tumor formation. A crucial component for the physical link between integrins and the cytoskeleton in the epidermal muscle attachment sites. The sequence is that of Protein wech (wech) from Drosophila melanogaster (Fruit fly).